We begin with the raw amino-acid sequence, 221 residues long: MLTLEDKDMKGFSWAIVPALTSLGYLIILVVSIFPFWVRLTNEESHEVFFSGLFENCFNAKCWKPRPLSIYIILGRVFLLSAVFLAFVTTFIMMPFASEFFPRTWKQNFVLACISFFTGACAFLALVLHALEIKALRMKLGPLQFSVLWPYYVLGFGIFLFIVAGTICLIQEMVCPCWHLLSTSQSMEEDHGSLYLDNLESLGGEPSSVQKETQVTAETVI.

4 membrane-spanning segments follow: residues 14–34, 77–97, 109–129, and 147–167; these read WAIV…VSIF, VFLL…MPFA, FVLA…LVLH, and VLWP…AGTI.

It is found in the membrane. This chain is Transmembrane protein 225B, found in Homo sapiens (Human).